A 217-amino-acid polypeptide reads, in one-letter code: PRELI domain-containing protein 1, mitochondrial (217 aa).

One can recognise a PRELI/MSF1 domain in the interval 36–174 (TEDIVHREVT…ILAKLQGEAP (139 aa)).

As to quaternary structure, forms a complex with TRIAP1 in the mitochondrion intermembrane space. Interacts with OPA1 and AIFM1. In terms of tissue distribution, abundantly expressed in all tissues tested except testis with highest levels in thymus.

Its subcellular location is the mitochondrion. The protein localises to the mitochondrion intermembrane space. It catalyses the reaction a 1,2-diacyl-sn-glycero-3-phosphate(in) = a 1,2-diacyl-sn-glycero-3-phosphate(out). Involved in the modulation of the mitochondrial apoptotic pathway by ensuring the accumulation of cardiolipin (CL) in mitochondrial membranes. In vitro, the TRIAP1:PRELID1 complex mediates the transfer of phosphatidic acid (PA) between liposomes and probably functions as a PA transporter across the mitochondrion intermembrane space to provide PA for CL synthesis in the inner membrane. Regulates the mitochondrial apoptotic pathway in primary Th cells. Regulates Th cell differentiation by down-regulating STAT6 thereby reducing IL-4-induced Th2 cell number. May be important for the development of vital and immunocompetent organs. The polypeptide is PRELI domain-containing protein 1, mitochondrial (Prelid1) (Mus musculus (Mouse)).